A 316-amino-acid polypeptide reads, in one-letter code: Protein U25 (316 aa).

This sequence belongs to the herpesviridae US22 family.

This Homo sapiens (Human) protein is Protein U25 (U25).